We begin with the raw amino-acid sequence, 344 residues long: Isopentenyl-diphosphate delta-isomerase (344 aa).

Residue 9 to 10 (RK) coordinates substrate. FMN contacts are provided by residues 65-67 (AMT), Ser-95, and Asn-124. Position 154 (Gln-154) interacts with substrate. Residue Glu-155 participates in Mg(2+) binding. FMN is bound by residues Lys-185, Thr-215, 259–261 (GVR), and 280–281 (SG).

Belongs to the IPP isomerase type 2 family. Homooctamer. Dimer of tetramers. FMN serves as cofactor. NADPH is required as a cofactor. Requires Mg(2+) as cofactor.

The protein localises to the cytoplasm. It catalyses the reaction isopentenyl diphosphate = dimethylallyl diphosphate. Functionally, involved in the biosynthesis of isoprenoids. Catalyzes the 1,3-allylic rearrangement of the homoallylic substrate isopentenyl (IPP) to its allylic isomer, dimethylallyl diphosphate (DMAPP). This is Isopentenyl-diphosphate delta-isomerase from Lacticaseibacillus paracasei (strain ATCC 334 / BCRC 17002 / CCUG 31169 / CIP 107868 / KCTC 3260 / NRRL B-441) (Lactobacillus paracasei).